A 328-amino-acid chain; its full sequence is Isopenicillin N synthase (328 aa).

The isopenicillin N site is built by R85, Y89, S181, and Y187. N-[(5S)-5-amino-5-carboxypentanoyl]-L-cysteinyl-D-valine-binding residues include R85, Y89, S181, Y187, H210, and D212. A Fe2OG dioxygenase domain is found at T178 to A284. The Fe(2+) site is built by H210, D212, and H266. Residue R275 coordinates 2-oxoglutarate. S277 is a binding site for isopenicillin N. S277 provides a ligand contact to N-[(5S)-5-amino-5-carboxypentanoyl]-L-cysteinyl-D-valine.

The protein belongs to the iron/ascorbate-dependent oxidoreductase family. It depends on Fe cation as a cofactor. L-ascorbate is required as a cofactor.

It catalyses the reaction N-[(5S)-5-amino-5-carboxypentanoyl]-L-cysteinyl-D-valine + O2 = isopenicillin N + 2 H2O. It functions in the pathway antibiotic biosynthesis; penicillin G biosynthesis; penicillin G from L-alpha-aminoadipate and L-cysteine and L-valine: step 2/3. Functionally, removes, in the presence of oxygen, 4 hydrogen atoms from delta-L-(alpha-aminoadipyl)-L-cysteinyl-D-valine (ACV) to form the azetidinone and thiazolidine rings of isopenicillin. This is Isopenicillin N synthase (pcbC) from Amycolatopsis lactamdurans (Nocardia lactamdurans).